Consider the following 55-residue polypeptide: Large ribosomal subunit protein bL32c (55 aa).

Belongs to the bacterial ribosomal protein bL32 family.

Its subcellular location is the plastid. It localises to the chloroplast. The chain is Large ribosomal subunit protein bL32c from Atropa belladonna (Belladonna).